Consider the following 185-residue polypeptide: Peptidyl-tRNA hydrolase (185 aa).

Tyr14 serves as a coordination point for tRNA. His19 (proton acceptor) is an active-site residue. Tyr65, Asn67, and Asn113 together coordinate tRNA.

Belongs to the PTH family. Monomer.

The protein resides in the cytoplasm. The catalysed reaction is an N-acyl-L-alpha-aminoacyl-tRNA + H2O = an N-acyl-L-amino acid + a tRNA + H(+). Functionally, hydrolyzes ribosome-free peptidyl-tRNAs (with 1 or more amino acids incorporated), which drop off the ribosome during protein synthesis, or as a result of ribosome stalling. Catalyzes the release of premature peptidyl moieties from peptidyl-tRNA molecules trapped in stalled 50S ribosomal subunits, and thus maintains levels of free tRNAs and 50S ribosomes. In Rickettsia rickettsii (strain Iowa), this protein is Peptidyl-tRNA hydrolase.